We begin with the raw amino-acid sequence, 162 residues long: Transcription elongation factor GreA (162 aa).

Residues 45-74 (ENAEYEAAREKQAFIEGRIKELEDMTARAE) are a coiled coil.

The protein belongs to the GreA/GreB family.

Functionally, necessary for efficient RNA polymerase transcription elongation past template-encoded arresting sites. The arresting sites in DNA have the property of trapping a certain fraction of elongating RNA polymerases that pass through, resulting in locked ternary complexes. Cleavage of the nascent transcript by cleavage factors such as GreA or GreB allows the resumption of elongation from the new 3'terminus. GreA releases sequences of 2 to 3 nucleotides. This chain is Transcription elongation factor GreA, found in Rickettsia conorii (strain ATCC VR-613 / Malish 7).